The primary structure comprises 264 residues: Thymidylate synthase (264 aa).

Arg-21 provides a ligand contact to dUMP. Residue His-51 participates in (6R)-5,10-methylene-5,6,7,8-tetrahydrofolate binding. Residue 126 to 127 (RR) participates in dUMP binding. The active-site Nucleophile is the Cys-146. Residues 166-169 (RSAD), Asn-177, and 207-209 (HIY) each bind dUMP. Residue Asp-169 participates in (6R)-5,10-methylene-5,6,7,8-tetrahydrofolate binding. Ala-263 contacts (6R)-5,10-methylene-5,6,7,8-tetrahydrofolate.

This sequence belongs to the thymidylate synthase family. Bacterial-type ThyA subfamily. In terms of assembly, homodimer.

The protein resides in the cytoplasm. It catalyses the reaction dUMP + (6R)-5,10-methylene-5,6,7,8-tetrahydrofolate = 7,8-dihydrofolate + dTMP. It participates in pyrimidine metabolism; dTTP biosynthesis. Its function is as follows. Catalyzes the reductive methylation of 2'-deoxyuridine-5'-monophosphate (dUMP) to 2'-deoxythymidine-5'-monophosphate (dTMP) while utilizing 5,10-methylenetetrahydrofolate (mTHF) as the methyl donor and reductant in the reaction, yielding dihydrofolate (DHF) as a by-product. This enzymatic reaction provides an intracellular de novo source of dTMP, an essential precursor for DNA biosynthesis. The sequence is that of Thymidylate synthase from Methylobacillus flagellatus (strain ATCC 51484 / DSM 6875 / VKM B-1610 / KT).